The following is a 368-amino-acid chain: MTQNFFNPVTTQTWTNGRHNVRCVKVIQETWDVRTFCFMADQPVLFFFKPGQFVTLELEIDGEAVMRSYTISSSPSVPYSFSITVKRLPDGRVSNWLHENLQVGSELVVHGPVGDFNVIDYPADKVLMLSGGVGVTPLMSMTRWFFDTNANVDLQFVHSARTPRDIIFHRELEHIFSRIPDFRLHIVCERGDESGEPWAGFRGYLAQAMLELMVPDYLEREIFCCGPTPYMKAVKQVLKSNGFDMSHYHEESFGATPADVRADVEELAEQAEAEMEAVDTADMLQVEFSNSGKSIRIMPEETVHAAAAKLGLHIPKACGMGICGTCKVKKLAGEVTMEHNGGITEEDEADGYILSCCSTPKSHVAIEF.

An FAD-binding FR-type domain is found at Asn16–Ile119. The 85-residue stretch at Leu284–Phe368 folds into the 2Fe-2S ferredoxin-type domain. [2Fe-2S] cluster contacts are provided by Cys318, Cys323, Cys326, and Cys356.

It in the N-terminal section; belongs to the FAD-binding oxidoreductase type 6 family. Monomer. The system is composed of an oxygenase subunit (BmoA) and a reductase subunit (BmoB). Maximal specific activity is obtained when the ratio of BmoA to BmoB is 5:1. FAD serves as cofactor. Requires [2Fe-2S] cluster as cofactor.

The catalysed reaction is glycine betaine + NADH + O2 + H(+) = N,N-dimethylglycine + formaldehyde + NAD(+) + H2O. Its function is as follows. Involved in degradation of glycine betaine. Part of a Rieske-type oxygenase system that catalyzes the conversion of glycine betaine (GB) to dimethylglycine (DMG). This subunit is the ferredoxin reductase component of the system. NADH is the preferred electron donor. This is Glycine betaine monooxygenase reductase subunit from Chromohalobacter salexigens (strain ATCC BAA-138 / DSM 3043 / CIP 106854 / NCIMB 13768 / 1H11).